A 448-amino-acid polypeptide reads, in one-letter code: Glutamyl-tRNA reductase (448 aa).

Substrate-binding positions include 48–51 (TCNR), Ser-100, 105–107 (EDQ), and Gln-111. Cys-49 acts as the Nucleophile in catalysis. NADP(+) is bound at residue 180–185 (GAGEIG).

It belongs to the glutamyl-tRNA reductase family. As to quaternary structure, homodimer.

It carries out the reaction (S)-4-amino-5-oxopentanoate + tRNA(Glu) + NADP(+) = L-glutamyl-tRNA(Glu) + NADPH + H(+). Its pathway is porphyrin-containing compound metabolism; protoporphyrin-IX biosynthesis; 5-aminolevulinate from L-glutamyl-tRNA(Glu): step 1/2. Functionally, catalyzes the NADPH-dependent reduction of glutamyl-tRNA(Glu) to glutamate 1-semialdehyde (GSA). The protein is Glutamyl-tRNA reductase of Methanosarcina mazei (strain ATCC BAA-159 / DSM 3647 / Goe1 / Go1 / JCM 11833 / OCM 88) (Methanosarcina frisia).